Here is a 563-residue protein sequence, read N- to C-terminus: Grainyhead-like protein 1 homolog (563 aa).

The Grh/CP2 DB domain maps to 194-428 (NNLGFQYVLE…ELDKPAALFI (235 aa)). Interaction with DNA stretches follow at residues 326–335 (TDFSTQKGVK) and 372–375 (RKLR). Residues 377-405 (EDKRAQKRKVQEYTAGALPGGRKKSDGEY) form a disordered region.

Belongs to the grh/CP2 family. Grainyhead subfamily.

The protein localises to the nucleus. Functionally, probable transcription factor. Binds a motif with the core sequence 5'-C[ACT][TG]G-3' in regulatory elements of target genes. Many putative target genes show oscillating expression levels, perhaps as a result of rhythmic variation in accumulation of grh-1. Plays a role in proper cuticle formation and/or barrier function and is required repetitively during development, for successful completion of each molt. Involved in modulating lifespan. Plays a role in defense response to bacteria. May act upstream of the p38 MAP kinase / pmk-1 pathway. May act downstream of the insulin/IGF-1 receptor signaling (IIS) pathway. The polypeptide is Grainyhead-like protein 1 homolog (Caenorhabditis elegans).